Reading from the N-terminus, the 122-residue chain is Large ribosomal subunit protein uL14 (122 aa).

It belongs to the universal ribosomal protein uL14 family. In terms of assembly, part of the 50S ribosomal subunit. Forms a cluster with proteins L3 and L19. In the 70S ribosome, L14 and L19 interact and together make contacts with the 16S rRNA in bridges B5 and B8.

In terms of biological role, binds to 23S rRNA. Forms part of two intersubunit bridges in the 70S ribosome. The sequence is that of Large ribosomal subunit protein uL14 from Hydrogenovibrio crunogenus (strain DSM 25203 / XCL-2) (Thiomicrospira crunogena).